The following is an 836-amino-acid chain: Periostin (836 aa).

The signal sequence occupies residues 1 to 21 (MIPFLPMFSLLLLLIVNPINA). In terms of domain architecture, EMI spans 40–94 (GPNVCALQQILGTKKKYFSTCKNWYKKSICGQKTTVLYECCPGYMRMEGMKGCPA). 5 disulfide bridges follow: Cys44-Cys80, Cys69-Cys333, Cys79-Cys92, Cys208-Cys311, and Cys467-Cys472. The residue at position 60 (Cys60) is an S-cysteinyl cysteine. 4 consecutive FAS1 domains span residues 97 to 230 (PIDH…DRVL), 234 to 365 (GTSI…DQVL), 368 to 492 (DSAK…REII), and 496 to 628 (EKSL…DKLL). N-linked (GlcNAc...) asparagine glycosylation is present at Asn599.

In terms of assembly, homodimer. Interacts with BMP1 and fibronectin. Post-translationally, gamma-carboxylation is controversial. Gamma-carboxyglutamated; gamma-carboxyglutamate residues are formed by vitamin K dependent carboxylation; this may be required for calcium binding. According to a more recent report, does not contain vitamin K-dependent gamma-carboxyglutamate residues. In terms of tissue distribution, widely expressed with highest levels in aorta, stomach, lower gastrointestinal tract, placenta, uterus, thyroid tissue and breast. Expressed in the kidney. Expressed in the lung. Up-regulated in epithelial ovarian tumors. Not expressed in normal ovaries. Also highly expressed at the tumor periphery of lung carcinoma tissue but not within the tumor. Overexpressed in breast cancers.

It localises to the golgi apparatus. The protein localises to the secreted. Its subcellular location is the extracellular space. The protein resides in the extracellular matrix. Functionally, induces cell attachment and spreading and plays a role in cell adhesion. Enhances incorporation of BMP1 in the fibronectin matrix of connective tissues, and subsequent proteolytic activation of lysyl oxidase LOX. The protein is Periostin (POSTN) of Homo sapiens (Human).